Here is a 159-residue protein sequence, read N- to C-terminus: Putative esterase DR_2406 (159 aa).

The protein belongs to the thioesterase PaaI family.

The protein is Putative esterase DR_2406 of Deinococcus radiodurans (strain ATCC 13939 / DSM 20539 / JCM 16871 / CCUG 27074 / LMG 4051 / NBRC 15346 / NCIMB 9279 / VKM B-1422 / R1).